A 527-amino-acid chain; its full sequence is Metal transporter Nramp6 (527 aa).

A run of 12 helical transmembrane segments spans residues Phe-38–Phe-58, Glu-71–Ala-91, Phe-115–Gly-135, Leu-143–Leu-163, Leu-173–His-193, Ile-221–Leu-241, Gly-264–Val-284, Leu-321–Gly-341, Cys-364–Lys-384, Leu-385–Leu-405, Thr-427–Ile-447, and Val-458–Ile-478.

This sequence belongs to the NRAMP (TC 2.A.55) family. Expressed in the vascular bundles of shoots, cotyledons, young leaves, sepals and petals, at the top of the flower stem and in the style. Expressed in the peduncle of developing siliques as well as in the septum and the funiculi.

Its subcellular location is the endomembrane system. Its function is as follows. Probable intracellular cadmium (Cd) transporter that participates in the distribution or availability of Cd within the cell. This Arabidopsis thaliana (Mouse-ear cress) protein is Metal transporter Nramp6 (NRAMP6).